A 418-amino-acid chain; its full sequence is MAASMCDVFSFCVGVAGRARVSVEVRFVSSAKGKGLFATQLIRKGETIFVERPLVAAQFLWNALYRYRACDHCLRALEKAEENAQRLTGKPGQVLPHPELCTVRKDLHQNCPHCQVMYCSAECRLAATEQYHQVLCPGPSQDDPLHPLNKLQEAWRSIHYPPETASIMLMARMVATVKQAKDKDRWIRLFSQFCNKTANEEEEIVHKLLGDKFKGQLELLRRLFTEALYEEAVSQWFTPDGFRSLFALVGTNGQGIGTSSLSQWVHACDTLELKPQDREQLDAFIDQLYKDIEAATGEFLNCEGSGLFVLQSCCNHSCVPNAETSFPENNFLLHVTALEDIKPGEEICISYLDCCQRERSRHSRHKILRENYLFVCSCPKCLAEADEPNVTSEEEEEEEEEEEGEPEDAELGDEMTDV.

The region spanning 21–352 is the SET domain; sequence VSVEVRFVSS…PGEEICISYL (332 aa). The MYND-type zinc finger occupies 98–136; that stretch reads PELCTVRKDLHQNCPHCQVMYCSAECRLAATEQYHQVLC. Tyr-351 is a binding site for S-adenosyl-L-methionine. The interval 385 to 418 is disordered; the sequence is ADEPNVTSEEEEEEEEEEEGEPEDAELGDEMTDV.

It belongs to the class V-like SAM-binding methyltransferase superfamily. As to quaternary structure, interacts with the N-CoR complex. Interacts with EHMT2 and CBX5. In terms of processing, ubiquitinated and degradaed by the proteasome in response to mild hypothermia (32 degrees Celsius), relieving repression of the SP1 gene.

It is found in the cytoplasm. It catalyses the reaction L-lysyl-[protein] + 3 S-adenosyl-L-methionine = N(6),N(6),N(6)-trimethyl-L-lysyl-[protein] + 3 S-adenosyl-L-homocysteine + 3 H(+). It carries out the reaction L-lysyl(20)-[histone H4] + 3 S-adenosyl-L-methionine = N(6),N(6),N(6)-trimethyl-L-lysyl(20)-[histone H4] + 3 S-adenosyl-L-homocysteine + 3 H(+). The catalysed reaction is L-lysyl(36)-[histone H3] + 3 S-adenosyl-L-methionine = N(6),N(6),N(6)-trimethyl-L-lysyl(36)-[histone H3] + 3 S-adenosyl-L-homocysteine + 3 H(+). Protein-lysine N-trimethyltransferase that specifically catalyzes trimethylation of 'Lys-22' of the RPL40/eL40 subunit of the 60S ribosome, thereby promoting translation elongation and protein synthesis. May also act as a histone methyltransferase in the context of histone octamers, but not on nucleosome substrates: trimethylates 'Lys-36' of histone H3 and 'Lys-20' of histone H4 to form H3K36me3 and H4K20me3, respectively. The histone methyltransferase activity, which is independent of its SET domain, is however unsure in vivo. In association with the NCoR corepressor complex, involved in the repression of toll-like receptor 4 (TLR4)-target inflammatory genes in macrophages, possibly by catalyzing the formation of H4K20me3 at the gene promoters. Plays an important role in embryonic stem (ES) cell self-renewal and differentiation. Maintains genome stability of ES cells during differentiation through regulation of heterochromatin formation and repression of endogenous repetitive DNA elements by promoting H4K20me3 marks. Acts as a regulator of the hypothermia response: its degradation in response to mild hypothermia relieves the formation of H3K36me3 at gene promoters, allowing expression of the neuroprotective gene SP1. The sequence is that of Protein-lysine N-trimethyltransferase SMYD5 from Homo sapiens (Human).